A 522-amino-acid polypeptide reads, in one-letter code: Involucrin (522 aa).

Positions Met-1–Leu-15 are enriched in polar residues. Disordered regions lie at residues Met-1–Glu-126, Gln-159–Gln-329, and Gln-366–Leu-496. A compositionally biased stretch (low complexity) spans Glu-76–His-91. Over residues Trp-92–Glu-126 the composition is skewed to basic and acidic residues. Residues Gln-169 to Gly-181 are compositionally biased toward low complexity. Composition is skewed to basic and acidic residues over residues Gln-182–Gln-198, Lys-214–Gly-231, Gln-252–Glu-264, Lys-274–Glu-290, and Gln-305–Leu-323. Positions Gln-375–Gln-389 are enriched in low complexity. 3 stretches are compositionally biased toward basic and acidic residues: residues Lys-391 to Glu-401, Gln-409 to Ala-418, and Lys-431 to Gln-465. Residues Gln-466–Gln-479 are compositionally biased toward low complexity.

It belongs to the involucrin family. Directly or indirectly cross-linked to cornifelin (CNFN). Post-translationally, substrate of transglutaminase. Specific glutamines or lysines are cross-linked to keratins, desmoplakin and to inter involucrin molecules. As to expression, keratinocytes of epidermis and other stratified squamous epithelia.

It localises to the cytoplasm. Functionally, part of the insoluble cornified cell envelope (CE) of stratified squamous epithelia. This chain is Involucrin (IVL), found in Hylobates lar (Lar gibbon).